A 110-amino-acid polypeptide reads, in one-letter code: Late cornified envelope protein 2D (110 aa).

Belongs to the LCE family. In terms of tissue distribution, skin-specific. Expression was readily detected in adult trunk skin, adult arm skin, fetal skin, penal skin, vulva, esophagus and tongue. Not expressed in the cervix, rectum, lung, colon, or placenta.

Precursors of the cornified envelope of the stratum corneum. The sequence is that of Late cornified envelope protein 2D (LCE2D) from Homo sapiens (Human).